Consider the following 254-residue polypeptide: Type II restriction enzyme HpaI (254 aa).

It carries out the reaction Endonucleolytic cleavage of DNA to give specific double-stranded fragments with terminal 5'-phosphates.. A P subtype restriction enzyme that recognizes the double-stranded sequence 5'-GTTAAC-3' and cleaves after T-3. The chain is Type II restriction enzyme HpaI (hpaIR) from Haemophilus parainfluenzae.